Reading from the N-terminus, the 273-residue chain is Dermonecrotic toxin LdSicTox-alphaIB3aii (273 aa).

Histidine 5 is an active-site residue. Mg(2+) contacts are provided by glutamate 25 and aspartate 27. Residue histidine 41 is the Nucleophile of the active site. 2 disulfides stabilise this stretch: cysteine 45-cysteine 51 and cysteine 47-cysteine 190. A Mg(2+)-binding site is contributed by aspartate 85.

This sequence belongs to the arthropod phospholipase D family. Class II subfamily. Mg(2+) serves as cofactor. In terms of tissue distribution, expressed by the venom gland.

The protein localises to the secreted. It carries out the reaction an N-(acyl)-sphingosylphosphocholine = an N-(acyl)-sphingosyl-1,3-cyclic phosphate + choline. It catalyses the reaction an N-(acyl)-sphingosylphosphoethanolamine = an N-(acyl)-sphingosyl-1,3-cyclic phosphate + ethanolamine. The enzyme catalyses a 1-acyl-sn-glycero-3-phosphocholine = a 1-acyl-sn-glycero-2,3-cyclic phosphate + choline. The catalysed reaction is a 1-acyl-sn-glycero-3-phosphoethanolamine = a 1-acyl-sn-glycero-2,3-cyclic phosphate + ethanolamine. In terms of biological role, dermonecrotic toxins cleave the phosphodiester linkage between the phosphate and headgroup of certain phospholipids (sphingolipid and lysolipid substrates), forming an alcohol (often choline) and a cyclic phosphate. This toxin acts on sphingomyelin (SM). It may also act on ceramide phosphoethanolamine (CPE), lysophosphatidylcholine (LPC) and lysophosphatidylethanolamine (LPE), but not on lysophosphatidylserine (LPS), and lysophosphatidylglycerol (LPG). It acts by transphosphatidylation, releasing exclusively cyclic phosphate products as second products. Induces dermonecrosis, hemolysis, increased vascular permeability, edema, inflammatory response, and platelet aggregation. In Loxosceles deserta (Desert recluse spider), this protein is Dermonecrotic toxin LdSicTox-alphaIB3aii.